The following is a 318-amino-acid chain: tRNA-cytidine(32) 2-sulfurtransferase (318 aa).

The PP-loop motif motif lies at 65-70 (SGGKDS). Residues Cys-140, Cys-143, and Cys-231 each contribute to the [4Fe-4S] cluster site.

The protein belongs to the TtcA family. As to quaternary structure, homodimer. It depends on Mg(2+) as a cofactor. [4Fe-4S] cluster is required as a cofactor.

It localises to the cytoplasm. It catalyses the reaction cytidine(32) in tRNA + S-sulfanyl-L-cysteinyl-[cysteine desulfurase] + AH2 + ATP = 2-thiocytidine(32) in tRNA + L-cysteinyl-[cysteine desulfurase] + A + AMP + diphosphate + H(+). It participates in tRNA modification. In terms of biological role, catalyzes the ATP-dependent 2-thiolation of cytidine in position 32 of tRNA, to form 2-thiocytidine (s(2)C32). The sulfur atoms are provided by the cysteine/cysteine desulfurase (IscS) system. The protein is tRNA-cytidine(32) 2-sulfurtransferase of Herminiimonas arsenicoxydans.